A 1576-amino-acid chain; its full sequence is ABC transporter ALT5 (1576 aa).

10 consecutive transmembrane segments (helical) span residues 27–47, 72–92, 99–119, 267–287, 289–309, 321–341, 387–407, 417–437, 500–520, and 525–545; these read LKFE…ILAV, ILGF…TQGT, GLFL…VIVC, LPLS…PILP, LVLI…TGFL, GLIG…SLYW, VLAG…AVIV, GFFA…ATVG, ITAM…TLAA, and VATS…APLG. Positions 289–556 constitute an ABC transmembrane type-1 1 domain; that stretch reads LVLIGLSISQ…LFQSVAPLMS (268 aa). Residues 602–834 form the ABC transporter 1 domain; sequence FRVVNGSFRW…NGGYLQSLCV (233 aa). 636 to 643 is a binding site for ATP; it reads GPVGSGKS. Helical transmembrane passes span 915–935, 957–977, 981–1001, 1035–1054, 1060–1078, 1142–1162, and 1171–1191; these read VVAL…FAFP, FWVG…FLTM, VTSI…AAIM, LIQF…VLAA, AAMY…KLYL, WLLF…VTLV, and GFAG…ASAM. Residues 919–1199 enclose the ABC transmembrane type-1 2 domain; the sequence is VAFLASAICY…AMQSYAKLET (281 aa). Residues 1236-1567 enclose the ABC transporter 2 domain; the sequence is IKLDGVSASY…SHSKFRALCE (332 aa). Position 1278–1285 (1278–1285) interacts with ATP; sequence GRSGSGKS.

Belongs to the ABC transporter superfamily. ABCC family. Conjugate transporter (TC 3.A.1.208) subfamily.

Its subcellular location is the cell membrane. ABC transporter that may provide the dual role AAL-toxin export and self-protection by allowing the fungus to evade the harmful effect of its own AAL-toxin production. The chain is ABC transporter ALT5 from Alternaria alternata (Alternaria rot fungus).